The sequence spans 119 residues: Protein FAM24A-like (119 aa).

An N-terminal signal peptide occupies residues 1-40 (MYKPFDLRTIITIIIGCGILTAMFLLIGLVLCLYSKISKA).

The protein belongs to the FAM24 family.

Its subcellular location is the secreted. This is Protein FAM24A-like from Mus musculus (Mouse).